Reading from the N-terminus, the 202-residue chain is Small ribosomal subunit protein uS4 (202 aa).

The interval 22 to 43 (TRKSARRAYPPGQHGQNRRKRS) is disordered. The S4 RNA-binding domain maps to 90–152 (MRLDNTVFRL…EKSKEMVKTN (63 aa)).

It belongs to the universal ribosomal protein uS4 family. In terms of assembly, part of the 30S ribosomal subunit. Contacts protein S5. The interaction surface between S4 and S5 is involved in control of translational fidelity.

Functionally, one of the primary rRNA binding proteins, it binds directly to 16S rRNA where it nucleates assembly of the body of the 30S subunit. Its function is as follows. With S5 and S12 plays an important role in translational accuracy. In Trichodesmium erythraeum (strain IMS101), this protein is Small ribosomal subunit protein uS4.